We begin with the raw amino-acid sequence, 955 residues long: 2-oxoglutarate dehydrogenase E1 component (955 aa).

Belongs to the alpha-ketoglutarate dehydrogenase family. Homodimer. Part of the 2-oxoglutarate dehydrogenase (OGDH) complex composed of E1 (2-oxoglutarate dehydrogenase), E2 (dihydrolipoamide succinyltransferase) and E3 (dihydrolipoamide dehydrogenase); the complex contains multiple copies of the three enzymatic components (E1, E2 and E3). Thiamine diphosphate serves as cofactor.

It catalyses the reaction N(6)-[(R)-lipoyl]-L-lysyl-[protein] + 2-oxoglutarate + H(+) = N(6)-[(R)-S(8)-succinyldihydrolipoyl]-L-lysyl-[protein] + CO2. Functionally, E1 component of the 2-oxoglutarate dehydrogenase (OGDH) complex which catalyzes the decarboxylation of 2-oxoglutarate, the first step in the conversion of 2-oxoglutarate to succinyl-CoA and CO(2). The sequence is that of 2-oxoglutarate dehydrogenase E1 component from Bacillus mycoides (strain KBAB4) (Bacillus weihenstephanensis).